The primary structure comprises 1079 residues: Zn(2)-C6 fungal-type transcription factor FTF1a (1079 aa).

The segment at residues 177 to 204 (CIACRRKKIRCSGEKPACKQCLHSCIPC) is a DNA-binding region (zn(2)-C6 fungal-type).

It localises to the nucleus. Zn(2)-C6 fungal-type transcription factor that has a role in the establishment of the fungus within the plant and/or the progress of the disease. Regulates the expression of virulence factors such as SIX1 and SIX6. The chain is Zn(2)-C6 fungal-type transcription factor FTF1a from Fusarium oxysporum f. sp. lycopersici (strain 4287 / CBS 123668 / FGSC 9935 / NRRL 34936) (Fusarium vascular wilt of tomato).